A 387-amino-acid chain; its full sequence is Probable protein phosphatase 2C 25 (387 aa).

Positions 52-351 (EFSFAVVQAN…DDITVVVVYI (300 aa)) constitute a PPM-type phosphatase domain. Mn(2+) contacts are provided by aspartate 83, glycine 84, aspartate 283, and aspartate 342.

It belongs to the PP2C family. It depends on Mg(2+) as a cofactor. Mn(2+) serves as cofactor.

It catalyses the reaction O-phospho-L-seryl-[protein] + H2O = L-seryl-[protein] + phosphate. The catalysed reaction is O-phospho-L-threonyl-[protein] + H2O = L-threonyl-[protein] + phosphate. The sequence is that of Probable protein phosphatase 2C 25 from Oryza sativa subsp. japonica (Rice).